The primary structure comprises 332 residues: Phenylalanine--tRNA ligase alpha subunit (332 aa).

Residue E252 coordinates Mg(2+).

Belongs to the class-II aminoacyl-tRNA synthetase family. Phe-tRNA synthetase alpha subunit type 1 subfamily. As to quaternary structure, tetramer of two alpha and two beta subunits. Mg(2+) serves as cofactor.

The protein resides in the cytoplasm. The catalysed reaction is tRNA(Phe) + L-phenylalanine + ATP = L-phenylalanyl-tRNA(Phe) + AMP + diphosphate + H(+). In Marinobacter nauticus (strain ATCC 700491 / DSM 11845 / VT8) (Marinobacter aquaeolei), this protein is Phenylalanine--tRNA ligase alpha subunit.